A 131-amino-acid polypeptide reads, in one-letter code: MTDPIADYLTRLRNAIKAKHKIVEIPASNLKKEITKILCNKGYIWDYRFIEDKHQGKIKIAMKYSNINKVNAIKVLKRISKPGLRKYTSYRKMSRVLNGLGIAILSTSKGVMTDKEARDLKIGGEVLCYIY.

Belongs to the universal ribosomal protein uS8 family. As to quaternary structure, part of the 30S ribosomal subunit. Contacts proteins S5 and S12.

One of the primary rRNA binding proteins, it binds directly to 16S rRNA central domain where it helps coordinate assembly of the platform of the 30S subunit. The chain is Small ribosomal subunit protein uS8 from Azobacteroides pseudotrichonymphae genomovar. CFP2.